Here is a 221-residue protein sequence, read N- to C-terminus: Carbonic anhydrase (221 aa).

Zn(2+) is bound by residues Cys-57, Asp-59, His-112, and Cys-115.

It belongs to the beta-class carbonic anhydrase family. Requires Zn(2+) as cofactor.

The protein resides in the cytoplasm. It is found in the nucleus. Its subcellular location is the mitochondrion intermembrane space. It catalyses the reaction hydrogencarbonate + H(+) = CO2 + H2O. In terms of biological role, catalyzes the reversible hydration of CO(2) to H(2)CO(3). The main role may be to provide inorganic carbon for the bicarbonate-dependent carboxylation reactions catalyzed by pyruvate carboxylase, acetyl-CoA carboxylase and carbamoyl-phosphate synthetase. Involved in protection against oxidative damage. Encodes a substrate for the non-classical protein export pathway for proteins that lack a cleavable signal sequence. In Saccharomyces cerevisiae (strain ATCC 204508 / S288c) (Baker's yeast), this protein is Carbonic anhydrase (NCE103).